Consider the following 399-residue polypeptide: Homeobox protein ceh-39 (399 aa).

2 disordered regions span residues 32–91 (PEPA…GDTE) and 158–187 (AKKSRGRTAPRTPKSLETSKPGRGVKRPAS). Low complexity predominate over residues 60–79 (SSMCGSSSSSSSSSYSSGSS). Positions 205-291 (NRQIGDDEEL…VRRALCFMKK (87 aa)) form a DNA-binding region, CUT. The homeobox DNA-binding region spans 315-374 (SDERIRRFTFTQTQLDSLHTVFQQQDRPNREMQQALSATLKLNRSTVGNFFMNARRRLPK).

Belongs to the CUT homeobox family. As to expression, expressed in hermaphrodite gonads.

The protein localises to the nucleus. The protein resides in the chromosome. In terms of biological role, transcriptional regulator which is involved in the sex determination and X chromosome dosage compensation pathways. Directly binds to 5'-ATTGAT-3' sites in the promoter of sex-determining factor xol-1 to negatively regulate its expression and promote hermaphrodite development. Associates with condensed DNA during mitosis. The chain is Homeobox protein ceh-39 from Caenorhabditis elegans.